Consider the following 333-residue polypeptide: uncharacterized protein (333 aa).

This is an uncharacterized protein from Ictalurid herpesvirus 1 (strain Auburn) (IcHV-1).